The sequence spans 173 residues: Bifunctional protein PyrR (173 aa).

Residues 40-41, 97-105, and arginine 130 contribute to the substrate site; these read TR and DDVLYTGRT. The short motif at 93–105 is the PRPP-binding element; sequence VILIDDVLYTGRT.

Belongs to the purine/pyrimidine phosphoribosyltransferase family. PyrR subfamily. Homodimer and homohexamer; in equilibrium.

It catalyses the reaction UMP + diphosphate = 5-phospho-alpha-D-ribose 1-diphosphate + uracil. Its function is as follows. Regulates transcriptional attenuation of the pyrimidine nucleotide (pyr) operon by binding in a uridine-dependent manner to specific sites on pyr mRNA. This disrupts an antiterminator hairpin in the RNA and favors formation of a downstream transcription terminator, leading to a reduced expression of downstream genes. Functionally, also displays a weak uracil phosphoribosyltransferase activity which is not physiologically significant. The chain is Bifunctional protein PyrR from Streptococcus pyogenes serotype M6 (strain ATCC BAA-946 / MGAS10394).